The primary structure comprises 285 residues: MIFMKDNIVTVEHLSFTYKDSEEPAVKDVSFSIPKGTWTTLVGHNGSGKSTIARLLNGILLPDDNPETLINIDGITLTEKTMWDIRDRVGIVFQNPDNQFVGATVEDDVAFGLENRQVPRPKMKSIVQDVLNQVGMTNFQKSEPQYLSGGQKQRVAIAGILAIGPKLIILDESTSMLDPAGKFKILKLIRKLQKENELTIFSITHDINEAEHADQILVLDKGSLLASDSPVDIFKDVSLIKNAGLDLPLFYKIKNKLINKGISIPQEVNTEEKLVKYLCQLNSKM.

The ABC transporter domain maps to 9–246; sequence VTVEHLSFTY…VSLIKNAGLD (238 aa). 43 to 50 contributes to the ATP binding site; it reads GHNGSGKS.

Belongs to the ABC transporter superfamily. Energy-coupling factor EcfA family. Forms a stable energy-coupling factor (ECF) transporter complex composed of 2 membrane-embedded substrate-binding proteins (S component), 2 ATP-binding proteins (A component) and 2 transmembrane proteins (T component).

It is found in the cell membrane. In terms of biological role, ATP-binding (A) component of a common energy-coupling factor (ECF) ABC-transporter complex. Unlike classic ABC transporters this ECF transporter provides the energy necessary to transport a number of different substrates. The polypeptide is Energy-coupling factor transporter ATP-binding protein EcfA1 (Lactobacillus gasseri (strain ATCC 33323 / DSM 20243 / BCRC 14619 / CIP 102991 / JCM 1131 / KCTC 3163 / NCIMB 11718 / NCTC 13722 / AM63)).